We begin with the raw amino-acid sequence, 157 residues long: MKCPKCNSTHSRVVDSRHADEANAIRRRRECENCGTRFTTFEHIEMSPLIVVKKDGTREQFLREKILNGLVRSCEKRPVGYQQLEDITNKVEWRLRDEGQAEVSSREIGKHVMNLLMHVDQVSYVRFASVYKEFKDVDQLLESMQGILQEKNKRSDN.

A zinc finger spans residues 3 to 34 (CPKCNSTHSRVVDSRHADEANAIRRRRECENC). The region spanning 49–139 (LIVVKKDGTR…VYKEFKDVDQ (91 aa)) is the ATP-cone domain.

It belongs to the NrdR family. Zn(2+) serves as cofactor.

In terms of biological role, negatively regulates transcription of bacterial ribonucleotide reductase nrd genes and operons by binding to NrdR-boxes. This is Transcriptional repressor NrdR from Staphylococcus carnosus (strain TM300).